The following is a 414-amino-acid chain: Esterase FrsA (414 aa).

Belongs to the FrsA family.

The catalysed reaction is a carboxylic ester + H2O = an alcohol + a carboxylate + H(+). Its function is as follows. Catalyzes the hydrolysis of esters. The polypeptide is Esterase FrsA (Klebsiella pneumoniae (strain 342)).